The sequence spans 92 residues: Protein RESPONSE TO LOW SULFUR 4 (92 aa).

Residues 8–63 are a coiled coil; the sequence is VMVAASEVEELRQKNGEMEKAVEEMRKEMLQLWRRTQVAEEAEEHLCSQLAELEAE.

Functionally, required for flower development in short-day conditions. The sequence is that of Protein RESPONSE TO LOW SULFUR 4 from Arabidopsis thaliana (Mouse-ear cress).